The primary structure comprises 396 residues: Elongation factor Tu (396 aa).

The tr-type G domain maps to 10 to 205 (KPHVNIGTIG…AVDSYIPTPE (196 aa)). Positions 19 to 26 (GHVDHGKT) are G1. 19–26 (GHVDHGKT) is a binding site for GTP. T26 lines the Mg(2+) pocket. The interval 60–64 (GITIN) is G2. The segment at 81–84 (DCPG) is G3. GTP contacts are provided by residues 81–85 (DCPGH) and 136–139 (NKCD). The interval 136–139 (NKCD) is G4. Positions 174–176 (SAK) are G5.

The protein belongs to the TRAFAC class translation factor GTPase superfamily. Classic translation factor GTPase family. EF-Tu/EF-1A subfamily. Monomer.

Its subcellular location is the cytoplasm. It carries out the reaction GTP + H2O = GDP + phosphate + H(+). Functionally, GTP hydrolase that promotes the GTP-dependent binding of aminoacyl-tRNA to the A-site of ribosomes during protein biosynthesis. In Brevibacillus brevis (strain 47 / JCM 6285 / NBRC 100599), this protein is Elongation factor Tu.